The chain runs to 553 residues: Fusion glycoprotein F0 (553 aa).

An N-terminal signal peptide occupies residues 1-31; it reads MGSRSSTRIPVPLMLTVRVALALSCVCPTSS. At 32–500 the chain is on the extracellular side; that stretch reads LDGRPLAAAG…VNVKLTSTSA (469 aa). Cystine bridges form between C76–C199, C338–C347, C362–C370, and C394–C399. A glycan (N-linked (GlcNAc...) asparagine; by host) is linked at N85. The segment at 117 to 141 is fusion peptide; it reads LIGAIIGGAALGVATAAQITAASAL. The stretch at 142-170 forms a coiled coil; that stretch reads ILANQNAANILRLKESIAATNEAVHEVTD. N191 carries N-linked (GlcNAc...) asparagine; by host glycosylation. N366 is a glycosylation site (N-linked (GlcNAc...) asparagine; by host). 2 N-linked (GlcNAc...) asparagine; by host glycosylation sites follow: N447 and N471. A coiled-coil region spans residues 466 to 491; it reads ELGNVNNSISNALDKLEESNSKLDKV. A helical membrane pass occupies residues 501 to 521; that stretch reads LITYIVLTVISLVCGILSLVL. Residues 522–553 lie on the Cytoplasmic side of the membrane; the sequence is ACYLMYKQKAQQKTLLWLGNNTLDQMRATTKM. The S-palmitoyl cysteine; by host moiety is linked to residue C523.

This sequence belongs to the paramyxoviruses fusion glycoprotein family. As to quaternary structure, homotrimer of disulfide-linked F1-F2. In terms of processing, the inactive precursor F0 is glycosylated and proteolytically cleaved into F1 and F2 to be functionally active. The cleavage is mediated by cellular proteases during the transport and maturation of the polypeptide.

It localises to the virion membrane. It is found in the host cell membrane. In terms of biological role, class I viral fusion protein. Under the current model, the protein has at least 3 conformational states: pre-fusion native state, pre-hairpin intermediate state, and post-fusion hairpin state. During viral and plasma cell membrane fusion, the heptad repeat (HR) regions assume a trimer-of-hairpins structure, positioning the fusion peptide in close proximity to the C-terminal region of the ectodomain. The formation of this structure appears to drive apposition and subsequent fusion of viral and plasma cell membranes. Directs fusion of viral and cellular membranes leading to delivery of the nucleocapsid into the cytoplasm. This fusion is pH independent and occurs directly at the outer cell membrane. The trimer of F1-F2 (F protein) probably interacts with HN at the virion surface. Upon HN binding to its cellular receptor, the hydrophobic fusion peptide is unmasked and interacts with the cellular membrane, inducing the fusion between cell and virion membranes. Later in infection, F proteins expressed at the plasma membrane of infected cells could mediate fusion with adjacent cells to form syncytia, a cytopathic effect that could lead to tissue necrosis. The sequence is that of Fusion glycoprotein F0 (F) from Gallus gallus (Chicken).